The sequence spans 408 residues: ATP phosphoribosyltransferase regulatory subunit (408 aa).

It belongs to the class-II aminoacyl-tRNA synthetase family. HisZ subfamily. As to quaternary structure, heteromultimer composed of HisG and HisZ subunits.

The protein localises to the cytoplasm. It functions in the pathway amino-acid biosynthesis; L-histidine biosynthesis; L-histidine from 5-phospho-alpha-D-ribose 1-diphosphate: step 1/9. Its function is as follows. Required for the first step of histidine biosynthesis. May allow the feedback regulation of ATP phosphoribosyltransferase activity by histidine. The protein is ATP phosphoribosyltransferase regulatory subunit of Thermosynechococcus vestitus (strain NIES-2133 / IAM M-273 / BP-1).